We begin with the raw amino-acid sequence, 340 residues long: 4-hydroxy-2-oxovalerate aldolase (340 aa).

The Pyruvate carboxyltransferase domain maps to 5-255 (IVITEVALRD…QTGVDLYKMM (251 aa)). 13-14 (RD) is a binding site for substrate. Aspartate 14 is a Mn(2+) binding site. Residue histidine 17 is the Proton acceptor of the active site. Substrate is bound by residues serine 167 and histidine 194. Mn(2+)-binding residues include histidine 194 and histidine 196. A substrate-binding site is contributed by tyrosine 285.

This sequence belongs to the 4-hydroxy-2-oxovalerate aldolase family.

It carries out the reaction (S)-4-hydroxy-2-oxopentanoate = acetaldehyde + pyruvate. The sequence is that of 4-hydroxy-2-oxovalerate aldolase from Brevibacillus brevis (strain 47 / JCM 6285 / NBRC 100599).